A 225-amino-acid polypeptide reads, in one-letter code: Histone H1.5 (225 aa).

Positions 1–23 (MSDVAVAETPAVKTPTKASKATK) are disordered. Position 2 is an N-acetylserine (serine 2). Residues 9-19 (TPAVKTPTKAS) are compositionally biased toward low complexity. In terms of domain architecture, H15 spans 37-113 (AHPPFINMIT…GANGRFRLAV (77 aa)). Residues 145 to 156 (KKTVAKKTGDKV) are compositionally biased toward basic and acidic residues. The disordered stretch occupies residues 145 to 225 (KKTVAKKTGD…RKAVGTAPKA (81 aa)). Residues 157-175 (KKVKSPKRIAKPAVKKVTK) show a composition bias toward basic residues. The span at 176–208 (KAAAPTKSAANETAPKKAAATEAAPKKAAVTKA) shows a compositional bias: low complexity.

It belongs to the histone H1/H5 family.

It is found in the nucleus. The protein resides in the chromosome. In terms of biological role, histones H1 are necessary for the condensation of nucleosome chains into higher-order structures. The polypeptide is Histone H1.5 (hil-5) (Caenorhabditis elegans).